The chain runs to 227 residues: Cytochrome c oxidase subunit 2 (227 aa).

The Mitochondrial intermembrane portion of the chain corresponds to 1–14; that stretch reads MAYPFQLGLQDATS. Residues 15–45 form a helical membrane-spanning segment; the sequence is PIMEELTNFHDHTLMIVFLISSLVLYLISLM. Over 46-59 the chain is Mitochondrial matrix; it reads LTTKLIHTNTMDAQ. Residues 60 to 87 form a helical membrane-spanning segment; that stretch reads EVETVWTILPAIILIMIALPSLRILYLM. Residues 88-227 are Mitochondrial intermembrane-facing; it reads DEINNPVLTV…LFENWSTSMI (140 aa). Residues histidine 161, cysteine 196, glutamate 198, cysteine 200, histidine 204, and methionine 207 each contribute to the Cu cation site. Glutamate 198 is a binding site for Mg(2+).

Belongs to the cytochrome c oxidase subunit 2 family. Component of the cytochrome c oxidase (complex IV, CIV), a multisubunit enzyme composed of 14 subunits. The complex is composed of a catalytic core of 3 subunits MT-CO1, MT-CO2 and MT-CO3, encoded in the mitochondrial DNA, and 11 supernumerary subunits COX4I, COX5A, COX5B, COX6A, COX6B, COX6C, COX7A, COX7B, COX7C, COX8 and NDUFA4, which are encoded in the nuclear genome. The complex exists as a monomer or a dimer and forms supercomplexes (SCs) in the inner mitochondrial membrane with NADH-ubiquinone oxidoreductase (complex I, CI) and ubiquinol-cytochrome c oxidoreductase (cytochrome b-c1 complex, complex III, CIII), resulting in different assemblies (supercomplex SCI(1)III(2)IV(1) and megacomplex MCI(2)III(2)IV(2)). Found in a complex with TMEM177, COA6, COX18, COX20, SCO1 and SCO2. Interacts with TMEM177 in a COX20-dependent manner. Interacts with COX20. Interacts with COX16. Requires Cu cation as cofactor.

It is found in the mitochondrion inner membrane. The catalysed reaction is 4 Fe(II)-[cytochrome c] + O2 + 8 H(+)(in) = 4 Fe(III)-[cytochrome c] + 2 H2O + 4 H(+)(out). Its function is as follows. Component of the cytochrome c oxidase, the last enzyme in the mitochondrial electron transport chain which drives oxidative phosphorylation. The respiratory chain contains 3 multisubunit complexes succinate dehydrogenase (complex II, CII), ubiquinol-cytochrome c oxidoreductase (cytochrome b-c1 complex, complex III, CIII) and cytochrome c oxidase (complex IV, CIV), that cooperate to transfer electrons derived from NADH and succinate to molecular oxygen, creating an electrochemical gradient over the inner membrane that drives transmembrane transport and the ATP synthase. Cytochrome c oxidase is the component of the respiratory chain that catalyzes the reduction of oxygen to water. Electrons originating from reduced cytochrome c in the intermembrane space (IMS) are transferred via the dinuclear copper A center (CU(A)) of subunit 2 and heme A of subunit 1 to the active site in subunit 1, a binuclear center (BNC) formed by heme A3 and copper B (CU(B)). The BNC reduces molecular oxygen to 2 water molecules using 4 electrons from cytochrome c in the IMS and 4 protons from the mitochondrial matrix. This is Cytochrome c oxidase subunit 2 (MT-CO2) from Gerbillurus vallinus (Brush-tailed hairy-footed gerbil).